A 127-amino-acid polypeptide reads, in one-letter code: Large ribosomal subunit protein uL18 (127 aa).

Residues 1–26 (MASTLTVRKSLSDRAKARARRQARGR) are disordered. Over residues 17 to 26 (ARARRQARGR) the composition is skewed to basic residues.

Belongs to the universal ribosomal protein uL18 family. As to quaternary structure, part of the 50S ribosomal subunit; part of the 5S rRNA/L5/L18/L25 subcomplex. Contacts the 5S and 23S rRNAs.

Functionally, this is one of the proteins that bind and probably mediate the attachment of the 5S RNA into the large ribosomal subunit, where it forms part of the central protuberance. The chain is Large ribosomal subunit protein uL18 from Cutibacterium acnes (strain DSM 16379 / KPA171202) (Propionibacterium acnes).